The primary structure comprises 278 residues: Serine/arginine-rich splicing factor SR34B (278 aa).

An RRM 1 domain is found at 7–82 (RTIYVGNLPG…HHLRVELAHG (76 aa)). Basic and acidic residues predominate over residues 81-91 (HGGRRSSHDAR). 2 disordered regions span residues 81 to 121 (HGGR…SEYR) and 192 to 263 (EYDS…RSLS). Over residues 95–107 (SGRGRGGRGGGDG) the composition is skewed to gly residues. 2 stretches are compositionally biased toward basic and acidic residues: residues 108 to 120 (GGRE…RSEY) and 192 to 201 (EYDSRRDSRS). The region spanning 120-195 (YRVVVSGLPS…EYVRVREYDS (76 aa)) is the RRM 2 domain. Ser201, Ser203, Ser225, Ser231, Ser233, Ser242, Ser250, Ser259, and Ser263 each carry phosphoserine. The span at 207 to 243 (SYSKSRSRGRSPSRSRSRSRSRSKSRSPKAKSLRRSP) shows a compositional bias: basic residues.

The protein belongs to the splicing factor SR family. SR subfamily. Component of the spliceosome.

The protein resides in the nucleus speckle. The protein localises to the nucleus. Its subcellular location is the nucleoplasm. In terms of biological role, probably involved in intron recognition and spliceosome assembly. The protein is Serine/arginine-rich splicing factor SR34B (SR34B) of Arabidopsis thaliana (Mouse-ear cress).